We begin with the raw amino-acid sequence, 461 residues long: Elongation factor 1-alpha (461 aa).

N,N,N-trimethylglycine is present on Gly-2. Position 3 is an N6,N6-dimethyllysine; alternate (Lys-3). Lys-3 bears the N6-methyllysine; alternate mark. Residues 6–241 enclose the tr-type G domain; sequence KTHINVVVIG…DSIEPPKRPT (236 aa). The segment at 15-22 is G1; sequence GHVDSGKS. 15–22 lines the GTP pocket; the sequence is GHVDSGKS. At Lys-31 the chain carries N6-methyllysine. The segment at 71-75 is G2; that stretch reads GITID. Lys-80 bears the N6,N6,N6-trimethyllysine mark. Residues 92–95 are G3; the sequence is DAPG. Residues 92-96 and 154-157 each bind GTP; these read DAPGH and NKMD. Positions 154 to 157 are G4; sequence NKMD. The interval 193 to 195 is G5; sequence SGF. Residue Lys-317 is modified to N6,N6-dimethyllysine; alternate. Lys-317 is subject to N6-methyllysine; alternate. An N6-methyllysine modification is found at Lys-391.

The protein belongs to the TRAFAC class translation factor GTPase superfamily. Classic translation factor GTPase family. EF-Tu/EF-1A subfamily.

Its subcellular location is the cytoplasm. This protein promotes the GTP-dependent binding of aminoacyl-tRNA to the A-site of ribosomes during protein biosynthesis. This is Elongation factor 1-alpha (TEF) from Pseudoechria curvicolla (Podospora curvicolla).